A 908-amino-acid polypeptide reads, in one-letter code: Zinc finger and BTB domain-containing protein 41 (908 aa).

The interval 38–59 is disordered; it reads TQAPERPTPEAAQRCQELPPSP. A BTB domain is found at 89 to 153; that stretch reads CDLLIIVEGK…LYTSEFFVYK (65 aa). A C2H2-type 1 zinc finger spans residues 208–231; it reads HQCKFCSRHFCYKKSLENHLAKTH. A compositionally biased stretch (basic residues) spans 252–261; the sequence is RRSKRNRKCP. Positions 252-344 are disordered; the sequence is RRSKRNRKCP…EAGDSAGSIH (93 aa). Over residues 267 to 276 the composition is skewed to acidic residues; sequence TSDDEQESGD. Positions 279–296 are enriched in basic and acidic residues; the sequence is DNLHQESSEKERSDRNDS. Acidic residues predominate over residues 297–336; sequence EDPGSEYNAEDEELEEEVSDEDSDTEQSDKDNDAEEEPEA. 13 consecutive C2H2-type zinc fingers follow at residues 360 to 382, 388 to 410, 421 to 444, 462 to 484, 490 to 513, 517 to 540, 546 to 568, 574 to 596, 602 to 624, 630 to 653, 667 to 689, 695 to 717, and 723 to 746; these read LQCP…TRVH, FECD…RKKH, HKCP…KRFH, WKCD…MILH, FKCT…EKFH, FPCD…ECTH, WTCF…LRIH, HLCS…LRVH, YECD…KKIH, HQCE…KSVH, HQCD…FRTH, YKCQ…LVIH, and FNCQ…DHVH.

It is found in the nucleus. In terms of biological role, may be involved in transcriptional regulation. The chain is Zinc finger and BTB domain-containing protein 41 (Zbtb41) from Mus musculus (Mouse).